The following is a 181-amino-acid chain: Oligoribonuclease (181 aa).

Residues 8-171 form the Exonuclease domain; the sequence is LIWVDLEMTG…DDIRESIAEL (164 aa). The active site involves Tyr129.

The protein belongs to the oligoribonuclease family.

The protein resides in the cytoplasm. In terms of biological role, 3'-to-5' exoribonuclease specific for small oligoribonucleotides. This is Oligoribonuclease from Vibrio parahaemolyticus serotype O3:K6 (strain RIMD 2210633).